We begin with the raw amino-acid sequence, 969 residues long: Isoleucine--tRNA ligase (969 aa).

A 'HIGH' region motif is present at residues 70–80 (PYANGAIHIGH). Glu601 contributes to the L-isoleucyl-5'-AMP binding site. The short motif at 642–646 (KMSKS) is the 'KMSKS' region element. Lys645 lines the ATP pocket.

Belongs to the class-I aminoacyl-tRNA synthetase family. IleS type 1 subfamily. In terms of assembly, monomer.

It localises to the cytoplasm. It carries out the reaction tRNA(Ile) + L-isoleucine + ATP = L-isoleucyl-tRNA(Ile) + AMP + diphosphate. In terms of biological role, catalyzes the attachment of isoleucine to tRNA(Ile). As IleRS can inadvertently accommodate and process structurally similar amino acids such as valine, to avoid such errors it has two additional distinct tRNA(Ile)-dependent editing activities. One activity is designated as 'pretransfer' editing and involves the hydrolysis of activated Val-AMP. The other activity is designated 'posttransfer' editing and involves deacylation of mischarged Val-tRNA(Ile). The chain is Isoleucine--tRNA ligase from Caulobacter vibrioides (strain ATCC 19089 / CIP 103742 / CB 15) (Caulobacter crescentus).